We begin with the raw amino-acid sequence, 223 residues long: DNA mismatch repair protein MutH (223 aa).

The protein belongs to the MutH family.

It localises to the cytoplasm. Its function is as follows. Sequence-specific endonuclease that cleaves unmethylated GATC sequences. It is involved in DNA mismatch repair. The polypeptide is DNA mismatch repair protein MutH (Haemophilus influenzae (strain 86-028NP)).